The chain runs to 515 residues: 2,3-bisphosphoglycerate-independent phosphoglycerate mutase (515 aa).

Residues D14 and S64 each coordinate Mn(2+). The active-site Phosphoserine intermediate is the S64. Substrate is bound by residues H125, 155–156 (RD), R187, R193, 263–266 (RADR), and K337. Positions 404, 408, 445, 446, and 464 each coordinate Mn(2+).

This sequence belongs to the BPG-independent phosphoglycerate mutase family. In terms of assembly, monomer. It depends on Mn(2+) as a cofactor.

The catalysed reaction is (2R)-2-phosphoglycerate = (2R)-3-phosphoglycerate. It participates in carbohydrate degradation; glycolysis; pyruvate from D-glyceraldehyde 3-phosphate: step 3/5. Catalyzes the interconversion of 2-phosphoglycerate and 3-phosphoglycerate. This is 2,3-bisphosphoglycerate-independent phosphoglycerate mutase from Pseudomonas paraeruginosa (strain DSM 24068 / PA7) (Pseudomonas aeruginosa (strain PA7)).